We begin with the raw amino-acid sequence, 699 residues long: MKQRFSALQLLKLLLLLQPPLPRALREALCPEPCNCVPDGALRCPGPTAGLTRLSLAYLPVKVIPSQAFRGLNEVIKIEISQIDSLERIEANAFDNLLNLSEILIQNTKNLRYIEPGAFINLPRLKYLSICNTGIRKFPDVTKVFSSESNFILEICDNLHITTIPGNAFQGMNNESVTLKLYGNGFEEVQSHAFNGTTLTSLELKENVHLEKMHNGAFRGATGPKTLDISSTKLQALPSYGLESIQRLIATSSYSLKKLPSRETFVNLLEATLTYPSHCCAFRNLPTKEQNFSHSISENFSKQCESTVRKVNNKTLYSSMLAESELSGWDYEYGFCLPKTPRCAPEPDAFNPCEDIMGYDFLRVLIWLINILAIMGNMTVLFVLLTSRYKLTVPRFLMCNLSFADFCMGLYLLLIASVDSQTKGQYYNHAIDWQTGSGCSTAGFFTVFASELSVYTLTVITLERWHTITYAIHLDQKLRLRHAILIMLGGWLFSSLIAMLPLVGVSNYMKVSICFPMDVETTLSQVYILTILILNVVAFFIICACYIKIYFAVRNPELMATNKDTKIAKKMAILIFTDFTCMAPISFFAISAAFKVPLITVTNSKVLLVLFYPINSCANPFLYAIFTKTFQRDFFLLLSKFGCCKRRAELYRRKDFSAYTSNCKNGFTGSNKPSQSTLKLSTLHCQGTALLDKTRYTEC.

The signal sequence occupies residues 1–26 (MKQRFSALQLLKLLLLLQPPLPRALR). The 40-residue stretch at 27–66 (EALCPEPCNCVPDGALRCPGPTAGLTRLSLAYLPVKVIPS) folds into the LRRNT domain. Residues 27 to 363 (EALCPEPCNC…EDIMGYDFLR (337 aa)) are Extracellular-facing. 3 LRR repeats span residues 96–115 (NLLN…RYIE), 124–145 (RLKY…TKVF), and 149–171 (SNFI…AFQG). Asn-99 carries N-linked (GlcNAc...) asparagine glycosylation. N-linked (GlcNAc...) asparagine glycans are attached at residues Asn-174 and Asn-195. LRR repeat units follow at residues 175–196 (ESVT…AFNG), 198–220 (TLTS…AFRG), and 223–244 (GPKT…GLES). N-linked (GlcNAc...) asparagine glycans are attached at residues Asn-291, Asn-299, and Asn-313. At Tyr-331 the chain carries Sulfotyrosine. A helical membrane pass occupies residues 364-385 (VLIWLINILAIMGNMTVLFVLL). Residues 386-395 (TSRYKLTVPR) lie on the Cytoplasmic side of the membrane. A helical transmembrane segment spans residues 396–416 (FLMCNLSFADFCMGLYLLLIA). Topologically, residues 417 to 439 (SVDSQTKGQYYNHAIDWQTGSGC) are extracellular. The cysteines at positions 439 and 514 are disulfide-linked. Residues 440–462 (STAGFFTVFASELSVYTLTVITL) traverse the membrane as a helical segment. Residues 463–482 (ERWHTITYAIHLDQKLRLRH) lie on the Cytoplasmic side of the membrane. A helical transmembrane segment spans residues 483–505 (AILIMLGGWLFSSLIAMLPLVGV). Residues 506-525 (SNYMKVSICFPMDVETTLSQ) are Extracellular-facing. A helical membrane pass occupies residues 526–549 (VYILTILILNVVAFFIICACYIKI). Residues 550-570 (YFAVRNPELMATNKDTKIAKK) lie on the Cytoplasmic side of the membrane. Residues 571 to 594 (MAILIFTDFTCMAPISFFAISAAF) form a helical membrane-spanning segment. Over 595–605 (KVPLITVTNSK) the chain is Extracellular. The helical transmembrane segment at 606-627 (VLLVLFYPINSCANPFLYAIFT) threads the bilayer. Residues 628–699 (KTFQRDFFLL…LLDKTRYTEC (72 aa)) are Cytoplasmic-facing. 2 S-palmitoyl cysteine lipidation sites follow: Cys-643 and Cys-644.

The protein belongs to the G-protein coupled receptor 1 family. FSH/LSH/TSH subfamily. Post-translationally, sulfated. As to expression, gonadal and thyroid cells.

It is found in the cell membrane. Its function is as follows. Receptor for lutropin-choriogonadotropic hormone. The activity of this receptor is mediated by G proteins which activate adenylate cyclase. This is Lutropin-choriogonadotropic hormone receptor (LHCGR) from Homo sapiens (Human).